The following is a 49-amino-acid chain: DNA-directed RNA polymerase subunit Rpo12 (49 aa).

Positions 11, 27, and 30 each coordinate Zn(2+).

The protein belongs to the archaeal Rpo12/eukaryotic RPC10 RNA polymerase subunit family. In terms of assembly, part of the RNA polymerase complex. It depends on Zn(2+) as a cofactor.

Its subcellular location is the cytoplasm. The enzyme catalyses RNA(n) + a ribonucleoside 5'-triphosphate = RNA(n+1) + diphosphate. In terms of biological role, DNA-dependent RNA polymerase (RNAP) catalyzes the transcription of DNA into RNA using the four ribonucleoside triphosphates as substrates. In Pyrococcus horikoshii (strain ATCC 700860 / DSM 12428 / JCM 9974 / NBRC 100139 / OT-3), this protein is DNA-directed RNA polymerase subunit Rpo12.